We begin with the raw amino-acid sequence, 367 residues long: CCN family member 4 (367 aa).

Residues 1 to 22 (MRWLLPWTLAAVAVLMVGNILA) form the signal peptide. The 74-residue stretch at 45–118 (RPEFCKWPCE…RYAIGVCAQV (74 aa)) folds into the IGFBP N-terminal domain. 4 disulfide bridges follow: Cys-49–Cys-73, Cys-53–Cys-75, Cys-55–Cys-76, and Cys-62–Cys-79. N-linked (GlcNAc...) asparagine glycosylation occurs at Asn-86. Intrachain disulfides connect Cys-87–Cys-101 and Cys-93–Cys-115. A VWFC domain is found at 121-186 (VGCVLDGVRY…GQCCEQWVCD (66 aa)). Asn-143 carries an N-linked (GlcNAc...) asparagine glycan. The TSP type-1 domain maps to 215–260 (NCIAYTSPWSPCSTTCGLGISTRISNVNARCWPEQESRLCNLRPCD). 5 cysteine pairs are disulfide-bonded: Cys-273/Cys-310, Cys-290/Cys-324, Cys-301/Cys-340, Cys-304/Cys-342, and Cys-309/Cys-346. A CTCK domain is found at 273 to 347 (CLAVYQPEEA…NACFCNLSCR (75 aa)). A glycan (N-linked (GlcNAc...) asparagine) is linked at Asn-284. N-linked (GlcNAc...) asparagine glycosylation is present at Asn-343.

Belongs to the CCN family.

The protein localises to the secreted. Downstream regulator in the Wnt/Frizzled-signaling pathway. Associated with cell survival. Adheres to skin and melanoma fibroblasts. In vitro binding to skin fibroblasts occurs through the proteoglycans, decorin and biglycan. This Rattus norvegicus (Rat) protein is CCN family member 4 (Ccn4).